The sequence spans 432 residues: Trigger factor (432 aa).

Positions 161 to 246 (DDRVTIDFVG…LKKVENMVLP (86 aa)) constitute a PPIase FKBP-type domain.

Belongs to the FKBP-type PPIase family. Tig subfamily.

The protein localises to the cytoplasm. It carries out the reaction [protein]-peptidylproline (omega=180) = [protein]-peptidylproline (omega=0). Involved in protein export. Acts as a chaperone by maintaining the newly synthesized protein in an open conformation. Functions as a peptidyl-prolyl cis-trans isomerase. This is Trigger factor from Haemophilus influenzae (strain PittGG).